Consider the following 1181-residue polypeptide: Pesticidal crystal protein Cry1Ae (1181 aa).

It belongs to the delta endotoxin family.

Its function is as follows. Promotes colloidosmotic lysis by binding to the midgut epithelial cells of many lepidopteran larvae. This chain is Pesticidal crystal protein Cry1Ae (cry1Ae), found in Bacillus thuringiensis subsp. alesti.